Here is a 253-residue protein sequence, read N- to C-terminus: Indole-3-glycerol phosphate synthase (253 aa).

This sequence belongs to the TrpC family.

The catalysed reaction is 1-(2-carboxyphenylamino)-1-deoxy-D-ribulose 5-phosphate + H(+) = (1S,2R)-1-C-(indol-3-yl)glycerol 3-phosphate + CO2 + H2O. Its pathway is amino-acid biosynthesis; L-tryptophan biosynthesis; L-tryptophan from chorismate: step 4/5. This is Indole-3-glycerol phosphate synthase from Bacillus thuringiensis subsp. konkukian (strain 97-27).